The primary structure comprises 181 residues: Gastrokine-3 (181 aa).

Residues 1-20 form the signal peptide; the sequence is MKHLVASSILGVFVLTPSLA. The 93-residue stretch at 53–145 folds into the BRICHOS domain; sequence NNIFSEWDGI…MCRDDPTYFA (93 aa). Cys80 and Cys137 are oxidised to a cystine.

It belongs to the gastrokine family.

The protein localises to the secreted. In terms of biological role, may inhibit gastric epithelial cell proliferation. This is Gastrokine-3 (GKN3P) from Homo sapiens (Human).